The sequence spans 304 residues: UDP-3-O-acyl-N-acetylglucosamine deacetylase (304 aa).

Zn(2+)-binding residues include H79, H238, and D242. The Proton donor role is filled by H265.

The protein belongs to the LpxC family. Zn(2+) serves as cofactor.

It catalyses the reaction a UDP-3-O-[(3R)-3-hydroxyacyl]-N-acetyl-alpha-D-glucosamine + H2O = a UDP-3-O-[(3R)-3-hydroxyacyl]-alpha-D-glucosamine + acetate. It participates in glycolipid biosynthesis; lipid IV(A) biosynthesis; lipid IV(A) from (3R)-3-hydroxytetradecanoyl-[acyl-carrier-protein] and UDP-N-acetyl-alpha-D-glucosamine: step 2/6. Catalyzes the hydrolysis of UDP-3-O-myristoyl-N-acetylglucosamine to form UDP-3-O-myristoylglucosamine and acetate, the committed step in lipid A biosynthesis. In Chromobacterium violaceum (strain ATCC 12472 / DSM 30191 / JCM 1249 / CCUG 213 / NBRC 12614 / NCIMB 9131 / NCTC 9757 / MK), this protein is UDP-3-O-acyl-N-acetylglucosamine deacetylase.